A 62-amino-acid chain; its full sequence is Metallothionein-4 (62 aa).

C6, C8, C14, C16, C20, C22, C25, C27, C30, C34, C35, C37, C38, C42, C45, C49, C51, C58, C60, and C61 together coordinate a divalent metal cation.

This sequence belongs to the metallothionein superfamily. Type 1 family. Expressed exclusively in stratified squamous epithelia associated with oral epithelia, esophagus, upper stomach, tail, footpads and neonatal skin.

In terms of biological role, seems to bind zinc and copper. Could play a special role in regulating zinc metabolism during the differentiation of stratified epithelia. This is Metallothionein-4 (Mt4) from Mus musculus (Mouse).